The chain runs to 81 residues: Sulfur carrier protein TusA (81 aa).

The active-site Cysteine persulfide intermediate is Cys-19.

This sequence belongs to the sulfur carrier protein TusA family.

Its subcellular location is the cytoplasm. Its function is as follows. Sulfur carrier protein which probably makes part of a sulfur-relay system. This chain is Sulfur carrier protein TusA, found in Shewanella putrefaciens (strain CN-32 / ATCC BAA-453).